The following is a 142-amino-acid chain: Hemoglobin subunit alpha (142 aa).

A Globin domain is found at 2-142 (VLSATDKSNV…VSTVLTSKYR (141 aa)). Serine 4 bears the Phosphoserine mark. Residues lysine 8 and lysine 12 each carry the N6-succinyllysine modification. The residue at position 17 (lysine 17) is an N6-acetyllysine; alternate. Lysine 17 carries the post-translational modification N6-succinyllysine; alternate. Tyrosine 25 carries the phosphotyrosine modification. A Phosphoserine modification is found at serine 36. The residue at position 41 (lysine 41) is an N6-succinyllysine. Serine 50 carries the phosphoserine modification. Residue histidine 59 participates in O2 binding. Position 88 (histidine 88) interacts with heme b. At serine 103 the chain carries Phosphoserine. Phosphothreonine is present on threonine 109. Serine 125 carries the post-translational modification Phosphoserine. 2 positions are modified to phosphothreonine: threonine 135 and threonine 138. Phosphoserine is present on serine 139.

This sequence belongs to the globin family. In terms of assembly, heterotetramer of two alpha chains and two beta chains. Red blood cells.

Its function is as follows. Involved in oxygen transport from the lung to the various peripheral tissues. In terms of biological role, hemopressin acts as an antagonist peptide of the cannabinoid receptor CNR1. Hemopressin-binding efficiently blocks cannabinoid receptor CNR1 and subsequent signaling. This chain is Hemoglobin subunit alpha (HBA), found in Alces alces alces (European moose).